A 286-amino-acid polypeptide reads, in one-letter code: Release factor glutamine methyltransferase (286 aa).

S-adenosyl-L-methionine is bound by residues 122-126 (GTGTG), aspartate 145, tryptophan 173, and asparagine 188. Substrate is bound at residue 188–191 (NPPY).

The protein belongs to the protein N5-glutamine methyltransferase family. PrmC subfamily.

It carries out the reaction L-glutaminyl-[peptide chain release factor] + S-adenosyl-L-methionine = N(5)-methyl-L-glutaminyl-[peptide chain release factor] + S-adenosyl-L-homocysteine + H(+). In terms of biological role, methylates the class 1 translation termination release factors RF1/PrfA and RF2/PrfB on the glutamine residue of the universally conserved GGQ motif. The chain is Release factor glutamine methyltransferase from Shewanella oneidensis (strain ATCC 700550 / JCM 31522 / CIP 106686 / LMG 19005 / NCIMB 14063 / MR-1).